A 161-amino-acid polypeptide reads, in one-letter code: Large ribosomal subunit protein uL15 (161 aa).

The interval 1 to 43 (MKLSEISDNPGARKKRMRIGRGIGSGKGKTGGRGGKGQTARSG) is disordered. Gly residues predominate over residues 21–37 (RGIGSGKGKTGGRGGKG).

The protein belongs to the universal ribosomal protein uL15 family. As to quaternary structure, part of the 50S ribosomal subunit.

Its function is as follows. Binds to the 23S rRNA. This Rhodopseudomonas palustris (strain HaA2) protein is Large ribosomal subunit protein uL15.